The sequence spans 269 residues: Undecaprenyl-diphosphatase (269 aa).

Helical transmembrane passes span 43-63 (KGKV…CWEY), 82-102 (FILN…LLHG), 108-128 (LFSS…ILLV), 188-208 (ATEF…FYDV), 222-242 (MFAV…KTLI), and 249-269 (DFKG…AYYW).

This sequence belongs to the UppP family.

Its subcellular location is the cell inner membrane. It carries out the reaction di-trans,octa-cis-undecaprenyl diphosphate + H2O = di-trans,octa-cis-undecaprenyl phosphate + phosphate + H(+). Its function is as follows. Catalyzes the dephosphorylation of undecaprenyl diphosphate (UPP). Confers resistance to bacitracin. This is Undecaprenyl-diphosphatase from Methylobacillus flagellatus (strain ATCC 51484 / DSM 6875 / VKM B-1610 / KT).